The primary structure comprises 176 residues: Flavodoxin 1 (176 aa).

One can recognise a Flavodoxin-like domain in the interval 4–165 (TGIFFGSDTG…RVEKWVKQVS (162 aa)).

It belongs to the flavodoxin family. It depends on FMN as a cofactor.

Low-potential electron donor to a number of redox enzymes (Potential). Involved in the reactivation of inactive cob(II)alamin in methionine synthase. In Salmonella typhimurium (strain LT2 / SGSC1412 / ATCC 700720), this protein is Flavodoxin 1 (fldA).